Here is a 372-residue protein sequence, read N- to C-terminus: uncharacterized protein (372 aa).

This is an uncharacterized protein from Mycobacterium tuberculosis (strain CDC 1551 / Oshkosh).